A 918-amino-acid polypeptide reads, in one-letter code: MKVARFQKIPNGENETMIPVLTSKKASELPVSEVASILQADLQNGLNKCEVSHRRAFHGWNEFDISEDEPLWKKYISQFKNPLIMLLLASAVISVLMHQFDDAVSITVAILIVVTVAFVQEYRSEKSLEELSKLVPPECHCVREGKLEHTLARDLVPGDTVCLSVGDRVPADLRLFEAVDLSIDESSLTGETTPCSKVTAPQPAATNGDLASRSNIAFMGTLVRCGKAKGVVIGTGENSEFGEVFKMMQAEEAPKTPLQKSMDLLGKQLSFYSFGIIGIIMLVGWLLGKDILEMFTISVSLAVAAIPEGLPIVVTVTLALGVMRMVKKRAIVKKLPIVETLGCCNVICSDKTGTLTKNEMTVTHIFTSDGLHAEVTGVGYNQFGEVIVDGDVVHGFYNPAVSRIVEAGCVCNDAVIRNNTLMGKPTEGALIALAMKMGLDGLQQDYIRKAEYPFSSEQKWMAVKCVHRTQQDRPEICFMKGAYEQVIKYCTTYQSKGQTLTLTQQQRDVQQEKARMGSAGLRVLALASGPELGQLTFLGLVGIIDPPRTGVKEAVTTLIASGVSIKMITGDSQETAIAIASRLGLYSKTSQSVSGEEIDAMDVQQLSQIVPKVAVFYRASPRHKMKIIKSLQKNGSVVAMTGDGVNDAVALKAADIGVAMGQTGTDVCKEAADMILVDDDFQTIMSAIEEGKGIYNNIKNFVRFQLSTSIAALTLISLATLMNFPNPLNAMQILWINIIMDGPPAQSLGVEPVDKDVIRKPPRNWKDSILTKNLILKILVSSIIIVCGTLFVFWRELRDNVITPRDTTMTFTCFVFFDMFNALSSRSQTKSVFEIGLCSNKMFCYAVLGSIMGQLLVIYFPPLQKVFQTESLSILDLLFLLGLTSSVCIVAEIIKKVERSREKIQKHVSSTSSSFLEV.

Residues 1–75 are Cytoplasmic-facing; that stretch reads MKVARFQKIP…SEDEPLWKKY (75 aa). The chain crosses the membrane as a helical span at residues 76 to 96; sequence ISQFKNPLIMLLLASAVISVL. At 97–98 the chain is on the extracellular side; that stretch reads MH. A helical transmembrane segment spans residues 99-119; the sequence is QFDDAVSITVAILIVVTVAFV. Residues 120–267 are Cytoplasmic-facing; the sequence is QEYRSEKSLE…LQKSMDLLGK (148 aa). The chain crosses the membrane as a helical span at residues 268–288; sequence QLSFYSFGIIGIIMLVGWLLG. The Extracellular segment spans residues 289 to 302; sequence KDILEMFTISVSLA. Residues 303-323 form a helical membrane-spanning segment; that stretch reads VAAIPEGLPIVVTVTLALGVM. The Cytoplasmic segment spans residues 324-703; it reads RMVKKRAIVK…IYNNIKNFVR (380 aa). Asp350 acts as the 4-aspartylphosphate intermediate in catalysis. The Mg(2+) site is built by Asp643 and Asp647. The chain crosses the membrane as a helical span at residues 704-724; sequence FQLSTSIAALTLISLATLMNF. At 725–732 the chain is on the extracellular side; it reads PNPLNAMQ. The chain crosses the membrane as a helical span at residues 733–753; sequence ILWINIIMDGPPAQSLGVEPV. The Cytoplasmic segment spans residues 754-773; that stretch reads DKDVIRKPPRNWKDSILTKN. A helical transmembrane segment spans residues 774–794; sequence LILKILVSSIIIVCGTLFVFW. Residues 795–842 lie on the Extracellular side of the membrane; that stretch reads RELRDNVITPRDTTMTFTCFVFFDMFNALSSRSQTKSVFEIGLCSNKM. A helical membrane pass occupies residues 843 to 863; that stretch reads FCYAVLGSIMGQLLVIYFPPL. Over 864 to 873 the chain is Cytoplasmic; that stretch reads QKVFQTESLS. Residues 874–894 form a helical membrane-spanning segment; the sequence is ILDLLFLLGLTSSVCIVAEII. The Extracellular portion of the chain corresponds to 895-918; that stretch reads KKVERSREKIQKHVSSTSSSFLEV.

It belongs to the cation transport ATPase (P-type) (TC 3.A.3) family. Type IIA subfamily. In terms of assembly, monomer. Homodimer.

The protein resides in the golgi apparatus. Its subcellular location is the trans-Golgi network membrane. The protein localises to the golgi stack membrane. The catalysed reaction is Ca(2+)(in) + ATP + H2O = Ca(2+)(out) + ADP + phosphate + H(+). It catalyses the reaction Mn(2+)(in) + ATP + H2O = Mn(2+)(out) + ADP + phosphate + H(+). ATP-driven pump that supplies the Golgi apparatus with Ca(2+) and Mn(2+) ions, both essential cofactors for processing and trafficking of newly synthesized proteins in the secretory pathway. Within a catalytic cycle, acquires Ca(2+) or Mn(2+) ions on the cytoplasmic side of the membrane and delivers them to the lumenal side. The transfer of ions across the membrane is coupled to ATP hydrolysis and is associated with a transient phosphorylation that shifts the pump conformation from inward-facing to outward-facing state. Plays a primary role in the maintenance of Ca(2+) homeostasis in the trans-Golgi compartment with a functional impact on Golgi and post-Golgi protein sorting as well as a structural impact on cisternae morphology. Responsible for loading the Golgi stores with Ca(2+) ions in keratinocytes, contributing to keratinocyte differentiation and epidermis integrity. Participates in Ca(2+) and Mn(2+) ions uptake into the Golgi store of hippocampal neurons and regulates protein trafficking required for neural polarity. May also play a role in the maintenance of Ca(2+) and Mn(2+) homeostasis and signaling in the cytosol while preventing cytotoxicity. The polypeptide is Calcium-transporting ATPase type 2C member 1 (ATP2C1) (Pongo abelii (Sumatran orangutan)).